Reading from the N-terminus, the 508-residue chain is Anthranilate synthase component 1 (508 aa).

Residues Ser-49 and 282–284 (PYM) each bind L-tryptophan. 317–318 (GT) contributes to the chorismate binding site. Glu-344 lines the Mg(2+) pocket. Chorismate is bound by residues Tyr-432, Arg-452, 466 to 468 (GAG), and Gly-468. Mg(2+) is bound at residue Glu-481.

Belongs to the anthranilate synthase component I family. In terms of assembly, heterotetramer consisting of two non-identical subunits: a beta subunit (TrpG) and a large alpha subunit (TrpE). Mg(2+) is required as a cofactor.

The enzyme catalyses chorismate + L-glutamine = anthranilate + pyruvate + L-glutamate + H(+). The protein operates within amino-acid biosynthesis; L-tryptophan biosynthesis; L-tryptophan from chorismate: step 1/5. Feedback inhibited by tryptophan. Part of a heterotetrameric complex that catalyzes the two-step biosynthesis of anthranilate, an intermediate in the biosynthesis of L-tryptophan. In the first step, the glutamine-binding beta subunit (TrpG) of anthranilate synthase (AS) provides the glutamine amidotransferase activity which generates ammonia as a substrate that, along with chorismate, is used in the second step, catalyzed by the large alpha subunit of AS (TrpE) to produce anthranilate. In the absence of TrpG, TrpE can synthesize anthranilate directly from chorismate and high concentrations of ammonia. This chain is Anthranilate synthase component 1 (trpE), found in Bacillus caldotenax.